The following is a 22-amino-acid chain: Mu-conotoxin SxIIIC (22 aa).

3 cysteine pairs are disulfide-bonded: cysteine 3–cysteine 15, cysteine 4–cysteine 21, and cysteine 10–cysteine 22. Cysteine 22 carries the post-translational modification Cysteine amide.

Belongs to the conotoxin M superfamily. As to expression, expressed by the venom duct.

Its subcellular location is the secreted. Functionally, mu-conotoxins block voltage-gated sodium channels (Nav). This toxin potently inhibits hNav1.4/SCN4A (IC(50)=15.11 nM). It also displays lower activities on other human subtypes (Nav1.1/SCN1A; IC(50)=132 nM, Nav1.2/SCN2A; IC(50)=363.8, Nav1.3/SCN3A; IC(50)=89.4, Nav1.6/SCN3A; IC(50)=124.9, Nav1.7/SCN7A; IC(50)=152.2). At Nav1.7/SCN9A, it does not elicit change in channel voltage-dependence of fast inactivation or activation, suggesting it acts as a pore blocker. Interestingly, it blocks current inhibition in an irreversible manner (tested during 35 minutes). This Conus striolatus (Cone snail) protein is Mu-conotoxin SxIIIC.